The following is a 172-amino-acid chain: Large ribosomal subunit protein uL10 (172 aa).

It belongs to the universal ribosomal protein uL10 family. As to quaternary structure, part of the ribosomal stalk of the 50S ribosomal subunit. The N-terminus interacts with L11 and the large rRNA to form the base of the stalk. The C-terminus forms an elongated spine to which L12 dimers bind in a sequential fashion forming a multimeric L10(L12)X complex.

In terms of biological role, forms part of the ribosomal stalk, playing a central role in the interaction of the ribosome with GTP-bound translation factors. The protein is Large ribosomal subunit protein uL10 of Rhizobium etli (strain CIAT 652).